The sequence spans 560 residues: Membrane protein insertase YidC (560 aa).

The helical transmembrane segment at 1-21 (MDIKRTILIAALAVVSYVMVL) threads the bilayer. A disordered region spans residues 42–66 (VAPGLPDGVPAGNNGASADVPSANA). Transmembrane regions (helical) follow at residues 341 to 361 (LELTVDYGFLWFIAQPIFWLL), 367 to 387 (LLGNWGWSIIVLTMLIKGLFF), 437 to 457 (LGGCLPILVQMPVFLALYWVL), 468 to 488 (WMLWITDLSIKDPFFILPIIM), and 515 to 535 (PIIFTFFFLWFPAGLVLYWVV).

Belongs to the OXA1/ALB3/YidC family. Type 1 subfamily. In terms of assembly, interacts with the Sec translocase complex via SecD. Specifically interacts with transmembrane segments of nascent integral membrane proteins during membrane integration.

The protein localises to the cell inner membrane. Functionally, required for the insertion and/or proper folding and/or complex formation of integral membrane proteins into the membrane. Involved in integration of membrane proteins that insert both dependently and independently of the Sec translocase complex, as well as at least some lipoproteins. Aids folding of multispanning membrane proteins. This chain is Membrane protein insertase YidC, found in Pseudomonas putida (strain GB-1).